Consider the following 114-residue polypeptide: FK506-binding protein 1 (114 aa).

An N-acetylserine modification is found at Ser-2. In terms of domain architecture, PPIase FKBP-type spans 26-114 (GDLVTIHYTG…VFDVELLKVN (89 aa)). Position 51 is a phosphoserine (Ser-51).

Belongs to the FKBP-type PPIase family. FKBP1 subfamily. In terms of assembly, interacts with HOM3; the interaction is direct, plays a role in feedback inhibition of aspartokinase by threonine, and is inhibited by tacrolimus and sirolimus. Interacts with HMO1. Interacts with FAP1.

It localises to the cytoplasm. The protein localises to the mitochondrion. It carries out the reaction [protein]-peptidylproline (omega=180) = [protein]-peptidylproline (omega=0). PPIases accelerate the folding of proteins. It catalyzes the cis-trans isomerization of proline imidic peptide bonds in oligopeptides. Plays a role in feedback inhibition of the pathway synthesizing the aspartate family of amino acids by binding to aspartokinase. This chain is FK506-binding protein 1 (FPR1), found in Saccharomyces cerevisiae (strain ATCC 204508 / S288c) (Baker's yeast).